A 184-amino-acid chain; its full sequence is Inorganic pyrophosphatase (184 aa).

Substrate contacts are provided by Lys19, Arg33, and Tyr45. Mg(2+)-binding residues include Asp55, Asp60, and Asp92. Substrate is bound at residue Tyr129.

The protein belongs to the PPase family. In terms of assembly, homohexamer. Requires Mg(2+) as cofactor.

It localises to the cytoplasm. It catalyses the reaction diphosphate + H2O = 2 phosphate + H(+). In terms of biological role, catalyzes the hydrolysis of inorganic pyrophosphate (PPi) forming two phosphate ions. In Mycoplasma genitalium (strain ATCC 33530 / DSM 19775 / NCTC 10195 / G37) (Mycoplasmoides genitalium), this protein is Inorganic pyrophosphatase.